A 231-amino-acid polypeptide reads, in one-letter code: Two-component response regulator ORR1 (231 aa).

Residues 9 to 135 (RVLLVDDSPV…DVQRLRNCSP (127 aa)) enclose the Response regulatory domain. D68 bears the 4-aspartylphosphate mark.

Belongs to the ARR family. Type-A subfamily. In terms of processing, two-component system major event consists of a His-to-Asp phosphorelay between a sensor histidine kinase (HK) and a response regulator (RR). In plants, the His-to-Asp phosphorelay involves an additional intermediate named Histidine-containing phosphotransfer protein (HPt). This multistep phosphorelay consists of a His-Asp-His-Asp sequential transfer of a phosphate group between first a His and an Asp of the HK protein, followed by the transfer to a conserved His of the HPt protein and finally the transfer to an Asp in the receiver domain of the RR protein. As to expression, expressed in roots, leaf blades, leaf sheaths, shoot apex, flowers and panicles.

Functionally, functions as a response regulator involved in His-to-Asp phosphorelay signal transduction system. Phosphorylation of the Asp residue in the receiver domain activates the ability of the protein to promote the transcription of target genes. Type-A response regulators seem to act as negative regulators of the cytokinin signaling. Involved in adventitious (crown) root initiation under the regulation of CRL5. The sequence is that of Two-component response regulator ORR1 from Oryza sativa subsp. japonica (Rice).